Consider the following 315-residue polypeptide: Ribonuclease HII (315 aa).

In terms of domain architecture, RNase H type-2 spans 78–267; it reads TLVAGVDEAG…VREALGLAPL (190 aa). A divalent metal cation is bound by residues aspartate 84, glutamate 85, and aspartate 176. The interval 273–292 is disordered; that stretch reads APPPESAAEPGGEGAIAGIA. Low complexity predominate over residues 278 to 292; the sequence is SAAEPGGEGAIAGIA.

Belongs to the RNase HII family. Mn(2+) serves as cofactor. The cofactor is Mg(2+).

It localises to the cytoplasm. It catalyses the reaction Endonucleolytic cleavage to 5'-phosphomonoester.. Functionally, endonuclease that specifically degrades the RNA of RNA-DNA hybrids. The chain is Ribonuclease HII from Anaeromyxobacter sp. (strain Fw109-5).